Reading from the N-terminus, the 187-residue chain is Transcriptional repressor NrdR (187 aa).

The disordered stretch occupies residues 1–21; that stretch reads MQCPYCQHTNSRVLESRSSEG. A zinc finger lies at 3–34; sequence CPYCQHTNSRVLESRSSEGGQSIRRRRECLNC. Residues 49–139 form the ATP-cone domain; sequence ITVIKHDGKK…VYGRFKGIKD (91 aa). 2 stretches are compositionally biased toward polar residues: residues 152 to 162 and 170 to 187; these read ISSPMSQWSKS and SQTSPCLSLTHNGSENSR. The disordered stretch occupies residues 152 to 187; the sequence is ISSPMSQWSKSSTRDRDQSQTSPCLSLTHNGSENSR.

This sequence belongs to the NrdR family. Zn(2+) serves as cofactor.

In terms of biological role, negatively regulates transcription of bacterial ribonucleotide reductase nrd genes and operons by binding to NrdR-boxes. In Crocosphaera subtropica (strain ATCC 51142 / BH68) (Cyanothece sp. (strain ATCC 51142)), this protein is Transcriptional repressor NrdR.